The sequence spans 691 residues: Histone-lysine N-methyltransferase Set8 (691 aa).

Disordered regions lie at residues 1–22, 211–234, 345–381, 422–450, and 484–516; these read MIMV…AAAA, RSGL…SATT, PAAG…GDGG, SRRR…QPTN, and APAK…ATNG. Low complexity predominate over residues 220–232; it reads SSHSSSSSGGASA. Residues 431 to 446 show a composition bias toward pro residues; it reads PQAPYQPQQPQPPPGT. The span at 484–503 shows a compositional bias: low complexity; the sequence is APAKPRAALTKGSKTKTGSK. An SET domain is found at 555–676; the sequence is EGLQVRNFMG…PGEELTYDYG (122 aa). S-adenosyl-L-methionine-binding positions include 565 to 567, Tyr610, and 637 to 638; these read KGR and NH.

The protein belongs to the class V-like SAM-binding methyltransferase superfamily. Histone-lysine methyltransferase family. PR/SET subfamily.

Its subcellular location is the nucleus. It is found in the chromosome. It catalyses the reaction L-lysyl(20)-[histone H4] + S-adenosyl-L-methionine = N(6)-methyl-L-lysyl(20)-[histone H4] + S-adenosyl-L-homocysteine + H(+). Histone methyltransferase that specifically monomethylates 'Lys-20' of histone H4. H4 'Lys-20' monomethylation is enriched during mitosis and represents a specific tag for epigenetic transcriptional repression. Mainly functions in euchromatin regions, thereby playing a central role in the silencing of euchromatic genes. Required for cell proliferation, possibly by contributing to the maintenance of proper higher-order structure of DNA and chromosome condensation during mitosis. The sequence is that of Histone-lysine N-methyltransferase Set8 from Drosophila pseudoobscura pseudoobscura (Fruit fly).